A 1288-amino-acid chain; its full sequence is 5-oxoprolinase (1288 aa).

T151 carries the phosphothreonine modification. Residues P1248–F1272 are disordered. Position 1265 is a phosphoserine (S1265).

This sequence belongs to the oxoprolinase family. In terms of assembly, homodimer.

The protein localises to the cytoplasm. It localises to the cytosol. The catalysed reaction is 5-oxo-L-proline + ATP + 2 H2O = L-glutamate + ADP + phosphate + H(+). Catalyzes the cleavage of 5-oxo-L-proline to form L-glutamate coupled to the hydrolysis of ATP to ADP and inorganic phosphate. This is 5-oxoprolinase from Homo sapiens (Human).